The sequence spans 269 residues: Formamidopyrimidine-DNA glycosylase (269 aa).

Catalysis depends on Pro-2, which acts as the Schiff-base intermediate with DNA. Glu-3 acts as the Proton donor in catalysis. Lys-57 acts as the Proton donor; for beta-elimination activity in catalysis. The DNA site is built by His-90, Arg-109, and Lys-150. The FPG-type zinc finger occupies 235 to 269; it reads QVYGRKGEPCRICGMPVVGTKHAQRATFYCRQCQK. Catalysis depends on Arg-259, which acts as the Proton donor; for delta-elimination activity.

It belongs to the FPG family. As to quaternary structure, monomer. Zn(2+) is required as a cofactor.

The catalysed reaction is Hydrolysis of DNA containing ring-opened 7-methylguanine residues, releasing 2,6-diamino-4-hydroxy-5-(N-methyl)formamidopyrimidine.. It carries out the reaction 2'-deoxyribonucleotide-(2'-deoxyribose 5'-phosphate)-2'-deoxyribonucleotide-DNA = a 3'-end 2'-deoxyribonucleotide-(2,3-dehydro-2,3-deoxyribose 5'-phosphate)-DNA + a 5'-end 5'-phospho-2'-deoxyribonucleoside-DNA + H(+). Functionally, involved in base excision repair of DNA damaged by oxidation or by mutagenic agents. Acts as a DNA glycosylase that recognizes and removes damaged bases. Has a preference for oxidized purines, such as 7,8-dihydro-8-oxoguanine (8-oxoG). Has AP (apurinic/apyrimidinic) lyase activity and introduces nicks in the DNA strand. Cleaves the DNA backbone by beta-delta elimination to generate a single-strand break at the site of the removed base with both 3'- and 5'-phosphates. The sequence is that of Formamidopyrimidine-DNA glycosylase from Klebsiella pneumoniae subsp. pneumoniae (strain ATCC 700721 / MGH 78578).